A 123-amino-acid chain; its full sequence is Small ribosomal subunit protein uS12cz/uS12cy (123 aa).

Belongs to the universal ribosomal protein uS12 family. As to quaternary structure, part of the 30S ribosomal subunit.

It is found in the plastid. Its subcellular location is the chloroplast. In terms of biological role, with S4 and S5 plays an important role in translational accuracy. Located at the interface of the 30S and 50S subunits. The sequence is that of Small ribosomal subunit protein uS12cz/uS12cy (rps12-A) from Daucus carota (Wild carrot).